The sequence spans 429 residues: Adenylosuccinate synthetase (429 aa).

Residues 12-18 and 40-42 each bind GTP; these read GDEGKGK and GHT. Asp13 acts as the Proton acceptor in catalysis. Residues Asp13 and Gly40 each coordinate Mg(2+). Residues 13–16, 38–41, Thr129, Arg143, Gln223, Thr238, and Arg302 contribute to the IMP site; these read DEGK and NAGH. The Proton donor role is filled by His41. 298 to 304 provides a ligand contact to substrate; it reads VVTGRKR. GTP is bound by residues Arg304, 330-332, and 412-414; these read KLD and STS.

It belongs to the adenylosuccinate synthetase family. As to quaternary structure, homodimer. It depends on Mg(2+) as a cofactor.

It localises to the cytoplasm. It carries out the reaction IMP + L-aspartate + GTP = N(6)-(1,2-dicarboxyethyl)-AMP + GDP + phosphate + 2 H(+). It functions in the pathway purine metabolism; AMP biosynthesis via de novo pathway; AMP from IMP: step 1/2. In terms of biological role, plays an important role in the de novo pathway of purine nucleotide biosynthesis. Catalyzes the first committed step in the biosynthesis of AMP from IMP. The polypeptide is Adenylosuccinate synthetase (Maricaulis maris (strain MCS10) (Caulobacter maris)).